A 212-amino-acid polypeptide reads, in one-letter code: Imidazole glycerol phosphate synthase subunit HisH (212 aa).

A Glutamine amidotransferase type-1 domain is found at 3–212; it reads DVAIIDYGMG…MLANFISWAP (210 aa). Catalysis depends on Cys82, which acts as the Nucleophile. Residues His192 and Glu194 contribute to the active site.

In terms of assembly, heterodimer of HisH and HisF.

The protein resides in the cytoplasm. It carries out the reaction 5-[(5-phospho-1-deoxy-D-ribulos-1-ylimino)methylamino]-1-(5-phospho-beta-D-ribosyl)imidazole-4-carboxamide + L-glutamine = D-erythro-1-(imidazol-4-yl)glycerol 3-phosphate + 5-amino-1-(5-phospho-beta-D-ribosyl)imidazole-4-carboxamide + L-glutamate + H(+). The catalysed reaction is L-glutamine + H2O = L-glutamate + NH4(+). It functions in the pathway amino-acid biosynthesis; L-histidine biosynthesis; L-histidine from 5-phospho-alpha-D-ribose 1-diphosphate: step 5/9. IGPS catalyzes the conversion of PRFAR and glutamine to IGP, AICAR and glutamate. The HisH subunit catalyzes the hydrolysis of glutamine to glutamate and ammonia as part of the synthesis of IGP and AICAR. The resulting ammonia molecule is channeled to the active site of HisF. This is Imidazole glycerol phosphate synthase subunit HisH from Aromatoleum aromaticum (strain DSM 19018 / LMG 30748 / EbN1) (Azoarcus sp. (strain EbN1)).